A 269-amino-acid polypeptide reads, in one-letter code: Shikimate dehydrogenase (NADP(+)) (269 aa).

Shikimate contacts are provided by residues Ser17–Ser19 and Thr64. Lys68 acts as the Proton acceptor in catalysis. Glu80 is a binding site for NADP(+). Asn89 and Asp105 together coordinate shikimate. NADP(+) is bound by residues Gly130–Ala134, Asn154–Lys159, and Met213. Residue Tyr215 participates in shikimate binding. Residue Gly237 coordinates NADP(+).

This sequence belongs to the shikimate dehydrogenase family. Homodimer.

It catalyses the reaction shikimate + NADP(+) = 3-dehydroshikimate + NADPH + H(+). It participates in metabolic intermediate biosynthesis; chorismate biosynthesis; chorismate from D-erythrose 4-phosphate and phosphoenolpyruvate: step 4/7. Functionally, involved in the biosynthesis of the chorismate, which leads to the biosynthesis of aromatic amino acids. Catalyzes the reversible NADPH linked reduction of 3-dehydroshikimate (DHSA) to yield shikimate (SA). This Neisseria mucosa protein is Shikimate dehydrogenase (NADP(+)).